A 109-amino-acid polypeptide reads, in one-letter code: Class I hydrophobin 7 (109 aa).

An N-terminal signal peptide occupies residues M1–A17. Intrachain disulfides connect C28–C88, C35–C82, C36–C69, and C89–C102.

This sequence belongs to the fungal hydrophobin family. Self-assembles to form functional amyloid fibrils called rodlets. Self-assembly into fibrillar rodlets occurs spontaneously at hydrophobic:hydrophilic interfaces and the rodlets further associate laterally to form amphipathic monolayers.

The protein resides in the secreted. The protein localises to the cell wall. Aerial growth, conidiation, and dispersal of filamentous fungi in the environment rely upon a capability of their secreting small amphipathic proteins called hydrophobins (HPBs) with low sequence identity. Class I can self-assemble into an outermost layer of rodlet bundles on aerial cell surfaces, conferring cellular hydrophobicity that supports fungal growth, development and dispersal; whereas Class II form highly ordered films at water-air interfaces through intermolecular interactions but contribute nothing to the rodlet structure. Hydph7 is a class I hydrophobin involved in fruiting body development. This is Class I hydrophobin 7 from Pleurotus ostreatus (strain PC15) (Oyster mushroom).